The sequence spans 2183 residues: MGRPFNGNNTHVVKQRSDEFERRRLERIEQLGQKFAAVERRDAIDDRMGFTRFSGDEKRVGWLVNMHETLLQSETAERGLAAVDYYFYDEEGGNFKSTVVFRPYFFVICKPHTEHAVKDLMEKMFERVLASTEIVTKEDLNLTNHLTGKKRKAVKLEFHNSEDLSSTRFTLSKIVDRQTQQTEQHLNIYELEGDVDTSTDVESSITGIKEFDVPFETRVAIDLDIRVGNWYEVTKENDTAVLKHMVEREYRADPVVMAYDIETEKAPLRFPDSAVDRIMMISYMIDGEGFLITNREMVSEDIEDFEYTPKPEFPGNFTIFNEPNEKAVLEKWFEHIRDVCPTVMTSYNGDFFDFPFIDKRTAFHGMNLYDEIGWKKVEEERYECSYCVHMDCLNWVKRDSYLPQGSQGLKAVTKVKLSYDPKELDPEKMTPYARDHPQILAEYSVSDAVATYYLYMKYVHPFIFSLCCIIPLNPDAVLRKGTGTLCEMLLMVKAYEGRIILPDKHKPALERHYKGHLVDNETYTGGHVESLAAGVFRSDIMVDFDIDTNSIDELLVNLDETLEFCVTVEAGKKSSDFENLDEVRDQIIEQLQELKSNPKRSDYPLIYHVDVASMYPNIMTTNRLQPDSMVDEKDCAVCDYNRPDKTCARELEWARRVDYYPVSKGDVNNLKQGLVEEYSGGRFGNGSSVEISYDEGMTEREKFQKRKGWAGLSGQEQANKLKERVAAFSLKTKARKTDSETTVQKTIVCQRENPFYVDVVQEFKQRRIDYKTKAKRWNKEAASASDPASREEAKKMAITNDSMQLAHKVILNSFYGYVMRKGSRWYSMEMAGVTCYTGAKIIKIARQTMEGLGIPLELDTDGIWCMLPKTFPEKFKCKFKDGSSYELEYPCSIMNYLVHRDFTNHQYQKLNPETGKYDTHSENSIFFELDGPYKCMMMPTSTDKGKGLKKRYVVFDDRNKIVELKGFEVKRRGELSLIKKFQSQLWDTFLEGSNLVECYAAQARVAEAWLAVIDSRGKNLSDEELIDLVCENKSMSKPVHEYGSQKSTALTTARRLAEIMGDSILTGGKLSTKYIIAVRTKNSMPVPEAKKGSDEDSSTADRAIPTLVFETESLDEKLRFLKRWMGPRWESTDPRDVIDWMYYRERLATTINKLVVIPAILLGLKNPVRGCDPPEWASDIIKQRDNPIKQSTLSSYFVKGKLPTPEPILSEEDEVMEIQVGDIESIGTTPSPSRPPGVPARVVVSKRVRKTVEETDKSTPSLPHKAPDPFADYAAYIKYAKVKWKHQKAQRDRRAHLFGESDNGIASSWVSKNAHLAQDAWHLVSIHAAEKPGQVEASVIIGDKMQRVQINVPRKVYVGSREPLKWDKFTDVTNAMAVAEEEQPKYLYRAVMSEDMYQTEMTNPESPLKDPHVTKIYEADVSPDSRALIELGSTFHLDASTPGILSKGFTHGFEAKWFKSGDSRSYLQNSGLSYAHIVHVVSSAVEIFVITPTWDAPALVFVHQSSSSEKLPDISKEYARLRRGERYKQNMDDCTVFSFPDTMQYEVEYCSNHRRMLQKVSKACDSLSGSRNGQLVFALHSPDRNVDEKVAALARIPCIRLRPVPPSTAAVGWQRDLVRRLIASFLSHGANISYLVEMARYAKMPLCHVQDTRDVIDVSYARRLIQNSVVLWWSAALSTGGALTDQAEVPVANNPGLYTNICFEIKIEHLVLNALLQSAVIQDTEGDIHNELLSNAFNPHALKTLKMVVKEWWEHGDKKRPPQDLLDNFTVWVYAPESRLFSPQLLYHTQNLTKKTFLYLAQECRKHQAQLVYADQHKLVLQTEKTELQLVYSYSNYIVRQIRTHPILKYVSVDITRYWDTFLWMDKWNYGGYSSDVIVDPSKQSESLLMHWHIANFLPETLQQEFSKWVQEYIHLLRLRKYPENRTTDVDDMPSDTPMLTDGDKDDAALLSDKFFGKGVVSYLHPKLVRRVKLLAQKLSDVLSSGDSIDAFKFPVLPGSMIQPETNPVVEFAKYVCHIYGINAKANFEVQILLRDLLNIFDINEFSEEGTFRDPSMSLKLTNMMCFKCKNPCDLDLCKDSCCTKSGFRCPLCNSLYDMVIVEQRLVGQLQRMILEYETQDFRCDKCRRVKEYELTEFCPCSGSWVTIMSAEDVHKELSIYDRCARWFELKMLGSFLRQLGYV.

Residues cysteine 2066, cysteine 2069, cysteine 2090, and cysteine 2093 each coordinate Zn(2+). The CysA-type zinc-finger motif lies at 2066–2093 (CFKCKNPCDLDLCKDSCCTKSGFRCPLC). [4Fe-4S] cluster is bound by residues cysteine 2124, cysteine 2127, cysteine 2139, and cysteine 2141. A CysB motif motif is present at residues 2124–2141 (CDKCRRVKEYELTEFCPC).

It belongs to the DNA polymerase type-B family. Heterotetramer. Consists of 4 subunits: POL2, DPB2, DPB3 and DPB4. Requires [4Fe-4S] cluster as cofactor.

The protein localises to the nucleus. It carries out the reaction DNA(n) + a 2'-deoxyribonucleoside 5'-triphosphate = DNA(n+1) + diphosphate. Its function is as follows. DNA polymerase II participates in chromosomal DNA replication. The polypeptide is DNA polymerase epsilon catalytic subunit A (POL2) (Yarrowia lipolytica (strain CLIB 122 / E 150) (Yeast)).